The sequence spans 658 residues: Endoplasmic reticulum mannosyl-oligosaccharide 1,2-alpha-mannosidase (658 aa).

Residues 1–50 (MYPPPAPPPAPHRDFISVTLSLGESYDNSKSRRRRSCWRKWKQLSRLQRN) are Cytoplasmic-facing. Residues 51–71 (VILFVLGFLILCGFLYSLHTA) traverse the membrane as a helical; Signal-anchor for type II membrane protein segment. Residues 72-658 (DQWKALSGRP…AHPLPIWAPA (587 aa)) are Lumenal-facing. Ser-102 bears the Phosphoserine mark. The disordered stretch occupies residues 123–142 (GPPHLQIRPPNTVSKDGMQD). Glu-289 acts as the Proton donor in catalysis. The active site involves Asp-422. Cysteines 486 and 515 form a disulfide. Catalysis depends on Glu-529, which acts as the Proton donor. Residue Glu-558 is part of the active site. Residue Thr-647 coordinates Ca(2+).

This sequence belongs to the glycosyl hydrolase 47 family. Ca(2+) serves as cofactor.

It localises to the endoplasmic reticulum membrane. The catalysed reaction is N(4)-(alpha-D-Man-(1-&gt;2)-alpha-D-Man-(1-&gt;2)-alpha-D-Man-(1-&gt;3)-[alpha-D-Man-(1-&gt;2)-alpha-D-Man-(1-&gt;3)-[alpha-D-Man-(1-&gt;2)-alpha-D-Man-(1-&gt;6)]-alpha-D-Man-(1-&gt;6)]-beta-D-Man-(1-&gt;4)-beta-D-GlcNAc-(1-&gt;4)-beta-D-GlcNAc)-L-asparaginyl-[protein] (N-glucan mannose isomer 9A1,2,3B1,2,3) + 4 H2O = N(4)-(alpha-D-Man-(1-&gt;3)-[alpha-D-Man-(1-&gt;3)-[alpha-D-Man-(1-&gt;6)]-alpha-D-Man-(1-&gt;6)]-beta-D-Man-(1-&gt;4)-beta-D-GlcNAc-(1-&gt;4)-beta-D-GlcNAc)-L-asparaginyl-[protein] (N-glucan mannose isomer 5A1,2) + 4 beta-D-mannose. It carries out the reaction N(4)-(alpha-D-Man-(1-&gt;2)-alpha-D-Man-(1-&gt;2)-alpha-D-Man-(1-&gt;3)-[alpha-D-Man-(1-&gt;3)-[alpha-D-Man-(1-&gt;2)-alpha-D-Man-(1-&gt;6)]-alpha-D-Man-(1-&gt;6)]-beta-D-Man-(1-&gt;4)-beta-D-GlcNAc-(1-&gt;4)-beta-D-GlcNAc)-L-asparaginyl-[protein] (N-glucan mannose isomer 8A1,2,3B1,3) + 3 H2O = N(4)-(alpha-D-Man-(1-&gt;3)-[alpha-D-Man-(1-&gt;3)-[alpha-D-Man-(1-&gt;6)]-alpha-D-Man-(1-&gt;6)]-beta-D-Man-(1-&gt;4)-beta-D-GlcNAc-(1-&gt;4)-beta-D-GlcNAc)-L-asparaginyl-[protein] (N-glucan mannose isomer 5A1,2) + 3 beta-D-mannose. Its pathway is protein modification; protein glycosylation. Involved in glycoprotein quality control targeting of misfolded glycoproteins for degradation. It primarily trims a single alpha-1,2-linked mannose residue from Man(9)GlcNAc(2) to produce Man(8)GlcNAc(2), but at high enzyme concentrations, as found in the ER quality control compartment (ERQC), it further trims the carbohydrates to Man(5-6)GlcNAc(2). The chain is Endoplasmic reticulum mannosyl-oligosaccharide 1,2-alpha-mannosidase (Man1b1) from Mus musculus (Mouse).